The chain runs to 164 residues: uncharacterized protein (164 aa).

A disordered region spans residues 107–136 (QSESGGSGSNSRSSSDTTEPTDPPAPVRKT).

This is an uncharacterized protein from Escherichia coli (Bacteriophage T4).